The primary structure comprises 668 residues: DNA ligase (668 aa).

NAD(+)-binding positions include 34–38, 83–84, and Glu113; these read DAEYD and SL. Lys115 (N6-AMP-lysine intermediate) is an active-site residue. NAD(+) contacts are provided by Arg136, Glu170, Lys286, and Lys310. Positions 404, 407, 422, and 427 each coordinate Zn(2+). The BRCT domain maps to 590 to 668; the sequence is ESDSYFAGKT…EVKMLEELKK (79 aa).

It belongs to the NAD-dependent DNA ligase family. LigA subfamily. Mg(2+) serves as cofactor. Requires Mn(2+) as cofactor.

It carries out the reaction NAD(+) + (deoxyribonucleotide)n-3'-hydroxyl + 5'-phospho-(deoxyribonucleotide)m = (deoxyribonucleotide)n+m + AMP + beta-nicotinamide D-nucleotide.. Its function is as follows. DNA ligase that catalyzes the formation of phosphodiester linkages between 5'-phosphoryl and 3'-hydroxyl groups in double-stranded DNA using NAD as a coenzyme and as the energy source for the reaction. It is essential for DNA replication and repair of damaged DNA. This chain is DNA ligase, found in Bacillus pumilus (strain SAFR-032).